The chain runs to 185 residues: Ribosome-recycling factor (185 aa).

The protein belongs to the RRF family.

The protein localises to the cytoplasm. Its function is as follows. Responsible for the release of ribosomes from messenger RNA at the termination of protein biosynthesis. May increase the efficiency of translation by recycling ribosomes from one round of translation to another. This chain is Ribosome-recycling factor, found in Idiomarina loihiensis (strain ATCC BAA-735 / DSM 15497 / L2-TR).